The primary structure comprises 616 residues: MKNEIDIKKLRNIAIIAHVDHGKTTLVDKLLQQSGTFESARGDVDERVMDSNDLEKERGITILAKNTAINWNDYRINIVDTPGHADFGGEVERVLSMVDSVLLVVDAFDGPMPQTRFVTQKAFAHGLKPIVVINKVDRPGARPDWVVDQVFDLFVNLGASDEQLDFPIIYASALNGVAGLEHEDLAEDMTPLFEAIVKHVEPPKVELDAPFQMQISQLDYNNYVGVIGIGRIKRGSIKPNQPVTIINSEGKTRQGRIGQVLGHLGLQRYEEDVAYAGDIVAITGLGELNISDTICDINTVEALPSLTVDEPTVTMFFCVNTSPFAGQEGKYVTSRQILERLNKELVHNVALRVEETPNPDEFRVSGRGELHLSVLIENMRREGYELAVSRPKVIYRDIDGKKQEPYEQVTIDVEEQHQGSVMEALGIRKGEVRDMLPDGKGRVRLEYIIPSRGLIGFRGDFMTMTSGTGLLYSSFSHYDEIKGGEIGQRKNGVLISNATGKALGYALFGLQERGKLMIDANIEVYEGQIIGIHSRSNDLTVNCLQGKKLTNMRASGKDDAIVLTTPVKFSLEQAIEFIDDDELVEVTPESIRIRKKLLTENDRKRANRTTTSTSTH.

The tr-type G domain occupies 8–204; the sequence is KKLRNIAIIA…AIVKHVEPPK (197 aa). GTP contacts are provided by residues 20-25 and 134-137; these read DHGKTT and NKVD.

It belongs to the TRAFAC class translation factor GTPase superfamily. Classic translation factor GTPase family. BipA subfamily. Monomer.

Its subcellular location is the cytoplasm. It catalyses the reaction GTP + H2O = GDP + phosphate + H(+). A 50S ribosomal subunit assembly protein with GTPase activity, required for 50S subunit assembly at low temperatures, may also play a role in translation. Binds GTP and analogs. Binds the 70S ribosome between the 30S and 50S subunits, in a similar position as ribosome-bound EF-G; it contacts a number of ribosomal proteins, both rRNAs and the A-site tRNA. The sequence is that of Large ribosomal subunit assembly factor BipA from Haemophilus influenzae (strain ATCC 51907 / DSM 11121 / KW20 / Rd).